A 273-amino-acid polypeptide reads, in one-letter code: WIMGHMVNAIYQIDEFVNLGANSIETDVSFDDNANPEYTYHGIPCDCGRSCLKWENYNDFLKGLRSATTPGNSKYQSKLILVVFDLKTGSLYDNQASEAGKKLAKNLLKHYWNNGNNGGRAYIVLSIPDLNHYPLIKGFTDTLKQEGHPELLEKVGYDFSGNDAIGDVAKAYKKAGVSGHVWQSDGITNCLLRGLSRVKDAVANRDSGKGYINKVYYWTVDKRATTRDALDAGVDGVMTNYPDVIADVMNEAAYKSKVRLATYEDSPWVTFKK.

His-5 is an active-site residue. Mg(2+) is bound by residues Glu-25 and Asp-27. His-41 serves as the catalytic Nucleophile. 2 disulfide bridges follow: Cys-45/Cys-51 and Cys-47/Cys-190. Asp-85 contributes to the Mg(2+) binding site.

Belongs to the arthropod phospholipase D family. Class II subfamily. Requires Mg(2+) as cofactor. Expressed by the venom gland.

It localises to the secreted. The enzyme catalyses an N-(acyl)-sphingosylphosphocholine = an N-(acyl)-sphingosyl-1,3-cyclic phosphate + choline. It carries out the reaction an N-(acyl)-sphingosylphosphoethanolamine = an N-(acyl)-sphingosyl-1,3-cyclic phosphate + ethanolamine. The catalysed reaction is a 1-acyl-sn-glycero-3-phosphocholine = a 1-acyl-sn-glycero-2,3-cyclic phosphate + choline. It catalyses the reaction a 1-acyl-sn-glycero-3-phosphoethanolamine = a 1-acyl-sn-glycero-2,3-cyclic phosphate + ethanolamine. In terms of biological role, dermonecrotic toxins cleave the phosphodiester linkage between the phosphate and headgroup of certain phospholipids (sphingolipid and lysolipid substrates), forming an alcohol (often choline) and a cyclic phosphate. This toxin acts on sphingomyelin (SM). It may also act on ceramide phosphoethanolamine (CPE), lysophosphatidylcholine (LPC) and lysophosphatidylethanolamine (LPE), but not on lysophosphatidylserine (LPS), and lysophosphatidylglycerol (LPG). It acts by transphosphatidylation, releasing exclusively cyclic phosphate products as second products. Induces dermonecrosis, hemolysis, increased vascular permeability, edema, inflammatory response, and platelet aggregation. In Loxosceles hirsuta (Recluse spider), this protein is Dermonecrotic toxin LhSicTox-alphaIA2biii.